The primary structure comprises 459 residues: Phosphomethylpyrimidine synthase (459 aa).

Substrate contacts are provided by residues N80, M109, Y139, H175, 195-197 (SRG), 236-239 (DSLR), and E275. Residue H279 coordinates Zn(2+). Y302 is a binding site for substrate. H343 is a binding site for Zn(2+). Residues C423, C426, and C431 each contribute to the [4Fe-4S] cluster site.

The protein belongs to the ThiC family. It depends on [4Fe-4S] cluster as a cofactor.

It carries out the reaction 5-amino-1-(5-phospho-beta-D-ribosyl)imidazole + S-adenosyl-L-methionine = 4-amino-2-methyl-5-(phosphooxymethyl)pyrimidine + CO + 5'-deoxyadenosine + formate + L-methionine + 3 H(+). It participates in cofactor biosynthesis; thiamine diphosphate biosynthesis. Its function is as follows. Catalyzes the synthesis of the hydroxymethylpyrimidine phosphate (HMP-P) moiety of thiamine from aminoimidazole ribotide (AIR) in a radical S-adenosyl-L-methionine (SAM)-dependent reaction. This is Phosphomethylpyrimidine synthase from Synechocystis sp. (strain ATCC 27184 / PCC 6803 / Kazusa).